The primary structure comprises 187 residues: Ribosome maturation factor RimM (187 aa).

The PRC barrel domain maps to 91–183 (DDGFYDHELE…ILVLTPPEGL (93 aa)).

The protein belongs to the RimM family. As to quaternary structure, binds ribosomal protein uS19.

It is found in the cytoplasm. In terms of biological role, an accessory protein needed during the final step in the assembly of 30S ribosomal subunit, possibly for assembly of the head region. Essential for efficient processing of 16S rRNA. May be needed both before and after RbfA during the maturation of 16S rRNA. It has affinity for free ribosomal 30S subunits but not for 70S ribosomes. The polypeptide is Ribosome maturation factor RimM (Corynebacterium jeikeium (strain K411)).